Consider the following 504-residue polypeptide: ATP synthase subunit alpha (504 aa).

Position 171 to 178 (171 to 178 (GDRATGKT)) interacts with ATP.

Belongs to the ATPase alpha/beta chains family. In terms of assembly, F-type ATPases have 2 components, CF(1) - the catalytic core - and CF(0) - the membrane proton channel. CF(1) has five subunits: alpha(3), beta(3), gamma(1), delta(1), epsilon(1). CF(0) has three main subunits: a(1), b(2) and c(9-12). The alpha and beta chains form an alternating ring which encloses part of the gamma chain. CF(1) is attached to CF(0) by a central stalk formed by the gamma and epsilon chains, while a peripheral stalk is formed by the delta and b chains.

It is found in the cell inner membrane. It carries out the reaction ATP + H2O + 4 H(+)(in) = ADP + phosphate + 5 H(+)(out). Produces ATP from ADP in the presence of a proton gradient across the membrane. The alpha chain is a regulatory subunit. This chain is ATP synthase subunit alpha, found in Sulfurihydrogenibium sp. (strain YO3AOP1).